Reading from the N-terminus, the 335-residue chain is Mesoderm-specific transcript protein (335 aa).

A run of 2 helical transmembrane segments spans residues 13-33 (WWVQ…HIPP) and 63-83 (VGVV…TSSY). Residues 71–310 (IVVLLHGFPT…PRSTVSILDD (240 aa)) enclose the AB hydrolase-1 domain. The RVIALD motif lies at 98-103 (RVIALD). The N-linked (GlcNAc...) asparagine glycan is linked to Asn-163. A helical membrane pass occupies residues 266–286 (VGALASVSIPIHFIYGPLDPI).

This sequence belongs to the AB hydrolase superfamily. In terms of tissue distribution, expressed in mesodermal tissues. Isoform 1 is exclusively expressed from the paternal allele in all fetal tissues and cell lines examined, whereas isoform 2 is preferentially expressed from the paternal allele in a tissue-type-specific manner.

It localises to the endoplasmic reticulum membrane. The polypeptide is Mesoderm-specific transcript protein (Mest) (Mus musculus (Mouse)).